A 68-amino-acid polypeptide reads, in one-letter code: ATP synthase F(0) complex subunit 8 (68 aa).

Residues 8–24 (TWSITIVSMIITLFIMF) traverse the membrane as a helical segment. An N6-acetyllysine; alternate modification is found at lysine 54. N6-succinyllysine; alternate is present on lysine 54. Lysine 57 bears the N6-acetyllysine mark.

This sequence belongs to the ATPase protein 8 family. As to quaternary structure, component of the ATP synthase complex composed at least of ATP5F1A/subunit alpha, ATP5F1B/subunit beta, ATP5MC1/subunit c (homooctomer), MT-ATP6/subunit a, MT-ATP8/subunit 8, ATP5ME/subunit e, ATP5MF/subunit f, ATP5MG/subunit g, ATP5MK/subunit k, ATP5MJ/subunit j, ATP5F1C/subunit gamma, ATP5F1D/subunit delta, ATP5F1E/subunit epsilon, ATP5PF/subunit F6, ATP5PB/subunit b, ATP5PD/subunit d, ATP5PO/subunit OSCP. ATP synthase complex consists of a soluble F(1) head domain (subunits alpha(3) and beta(3)) - the catalytic core - and a membrane F(0) domain - the membrane proton channel (subunits c, a, 8, e, f, g, k and j). These two domains are linked by a central stalk (subunits gamma, delta, and epsilon) rotating inside the F1 region and a stationary peripheral stalk (subunits F6, b, d, and OSCP). Interacts with PRICKLE3.

The protein resides in the mitochondrion membrane. Functionally, subunit 8, of the mitochondrial membrane ATP synthase complex (F(1)F(0) ATP synthase or Complex V) that produces ATP from ADP in the presence of a proton gradient across the membrane which is generated by electron transport complexes of the respiratory chain. ATP synthase complex consist of a soluble F(1) head domain - the catalytic core - and a membrane F(1) domain - the membrane proton channel. These two domains are linked by a central stalk rotating inside the F(1) region and a stationary peripheral stalk. During catalysis, ATP synthesis in the catalytic domain of F(1) is coupled via a rotary mechanism of the central stalk subunits to proton translocation. In vivo, can only synthesize ATP although its ATP hydrolase activity can be activated artificially in vitro. Part of the complex F(0) domain. The protein is ATP synthase F(0) complex subunit 8 of Ceratotherium simum (White rhinoceros).